We begin with the raw amino-acid sequence, 428 residues long: Histone deacetylase 3 (428 aa).

Residues 3-316 (KTVAYFYDPD…WTYETSLLVD (314 aa)) form a histone deacetylase region. The 1D-myo-inositol 1,4,5,6-tetrakisphosphate site is built by histidine 17, glycine 21, and lysine 25. Residue histidine 135 is part of the active site. 3 residues coordinate Zn(2+): aspartate 170, histidine 172, and aspartate 259. Arginine 265 serves as a coordination point for 1D-myo-inositol 1,4,5,6-tetrakisphosphate. Positions 385 to 428 (LSYDRTDEPDPEERGSEENYSRPEAANEFYDGDHDNDKESDVEI) are disordered. Composition is skewed to basic and acidic residues over residues 386 to 405 (SYDR…ENYS) and 415 to 428 (DGDH…DVEI).

This sequence belongs to the histone deacetylase family. HD type 1 subfamily.

It is found in the nucleus. Its subcellular location is the chromosome. It localises to the cytoplasm. The protein resides in the cytosol. It catalyses the reaction N(6)-acetyl-L-lysyl-[histone] + H2O = L-lysyl-[histone] + acetate. The enzyme catalyses N(6)-acetyl-L-lysyl-[protein] + H2O = L-lysyl-[protein] + acetate. It carries out the reaction N(6)-(2E)-butenoyl-L-lysyl-[protein] + H2O = (2E)-2-butenoate + L-lysyl-[protein]. The catalysed reaction is N(6)-(2-hydroxyisobutanoyl)-L-lysyl-[protein] + H2O = 2-hydroxy-2-methylpropanoate + L-lysyl-[protein]. It catalyses the reaction N(6)-[(S)-lactoyl]-L-lysyl-[protein] + H2O = (S)-lactate + L-lysyl-[protein]. Its activity is regulated as follows. Inositol tetraphosphate (1D-myo-inositol 1,4,5,6-tetrakisphosphate) promotes the histone deacetylase activity by acting as an intermolecular glue between HDAC3 and N-Cor repressor complex components. Its function is as follows. Histone deacetylase that catalyzes the deacetylation of lysine residues on the N-terminal part of the core histones (H2A, H2B, H3 and H4), and some other non-histone substrates. Histone deacetylation gives a tag for epigenetic repression and plays an important role in transcriptional regulation, cell cycle progression and developmental events. Histone deacetylases act via the formation of large multiprotein complexes, such as N-Cor repressor complex, which activate the histone deacetylase activity. Participates in the BCL6 transcriptional repressor activity by deacetylating the H3 'Lys-27' (H3K27) on enhancer elements, antagonizing EP300 acetyltransferase activity and repressing proximal gene expression. Also functions as a deacetylase for non-histone targets. In addition to protein deacetylase activity, also acts as a protein-lysine deacylase by recognizing other acyl groups: catalyzes removal of (2E)-butenoyl (crotonyl), lactoyl (lactyl) and 2-hydroxyisobutanoyl (2-hydroxyisobutyryl) acyl groups from lysine residues, leading to protein decrotonylation, delactylation and de-2-hydroxyisobutyrylation, respectively. In Gallus gallus (Chicken), this protein is Histone deacetylase 3 (HDAC3).